The primary structure comprises 703 residues: Peptide transporter CstA (703 aa).

The next 16 membrane-spanning stretches (helical) occupy residues 6–26 (TKIL…YLAL), 29–49 (GESV…MIGY), 87–107 (VLFG…GPIL), 118–138 (LWIL…VLFI), 162–182 (VAMV…AMVV), 190–210 (PWGL…GIYM), 221–241 (ASII…VIAA), 256–276 (LAIV…WFLL), 282–302 (LSTF…VLVA), 319–339 (GPVF…CGAI), 374–394 (AVAI…YFAI), 463–483 (LMAF…LTAV), 514–534 (GLLA…QGAI), 547–567 (FGVS…TILV), 574–594 (YTWV…YGGI), and 660–680 (AILC…CIGI).

It belongs to the peptide transporter carbon starvation (CstA) (TC 2.A.114) family.

It is found in the cell inner membrane. Functionally, involved in the uptake of dipeptides and tripeptides. May influence host-pathogen interactions. Involved in motility and agglutination, and has a role in stimulation of dendritic cells. The polypeptide is Peptide transporter CstA (Campylobacter jejuni subsp. jejuni serotype O:2 (strain ATCC 700819 / NCTC 11168)).